The following is a 189-amino-acid chain: MSTSGTGKMTRAQRRAAARRNRWTARVQPVIVEPLAAGQGKAIKAIAGYSISKWEASSDAITAKATNAMSITLPHELSSEKNKELKVGRVLLWLGLLPSVAGRIKACVAEKQAQAEAAFQVALAVADSSKEVVAAMYTDAFRGATLGDLLNLQIYLYASEAVPAKAVVVHLEVEHVRPTFDDFFTPVYR.

The tract at residues 1–21 (MSTSGTGKMTRAQRRAAARRN) is disordered. The span at 11 to 21 (RAQRRAAARRN) shows a compositional bias: basic residues.

The protein belongs to the bromovirus capsid protein family.

The protein localises to the virion. Functionally, capsid protein. Binds specifically to the subgenomic RNA4 to ensure selective packaging. In Brome mosaic virus (BMV), this protein is Capsid protein.